We begin with the raw amino-acid sequence, 294 residues long: 4-hydroxybenzoate octaprenyltransferase (294 aa).

8 consecutive transmembrane segments (helical) span residues 24 to 44 (IGILLLMWPTLWALWLAADGF), 47 to 67 (LHLIVIFALGTVLMRSAGCVI), 99 to 119 (LLAAGLSLVSFVLILPLDPLV), 139 to 159 (FLAIPQAYLGIAFGFGIPMGF), 164 to 184 (GEVPAIAWLLLLANIFWAVAY), 213 to 233 (VAAVMLCYAVAFGLIAAVGIA), 238 to 258 (PWFFGGIAIAAAIAIYHYTLI), and 274 to 294 (NWVGAVLFVALVIDYVAFPAA).

The protein belongs to the UbiA prenyltransferase family. The cofactor is Mg(2+).

The protein localises to the cell inner membrane. The enzyme catalyses all-trans-octaprenyl diphosphate + 4-hydroxybenzoate = 4-hydroxy-3-(all-trans-octaprenyl)benzoate + diphosphate. The protein operates within cofactor biosynthesis; ubiquinone biosynthesis. In terms of biological role, catalyzes the prenylation of para-hydroxybenzoate (PHB) with an all-trans polyprenyl group. Mediates the second step in the final reaction sequence of ubiquinone-8 (UQ-8) biosynthesis, which is the condensation of the polyisoprenoid side chain with PHB, generating the first membrane-bound Q intermediate 3-octaprenyl-4-hydroxybenzoate. This chain is 4-hydroxybenzoate octaprenyltransferase, found in Aromatoleum aromaticum (strain DSM 19018 / LMG 30748 / EbN1) (Azoarcus sp. (strain EbN1)).